The primary structure comprises 205 residues: Holliday junction branch migration complex subunit RuvA (205 aa).

The tract at residues 1–64 (MIGKLKGVID…EDQIKLFGFR (64 aa)) is domain I. The tract at residues 65–143 (SDIEREWFRL…AFANVDPAVV (79 aa)) is domain II. The tract at residues 144–154 (HLAGAVDDDRA) is flexible linker. The domain III stretch occupies residues 154–205 (APRPVKDAISALVNLGYGQPQAAAAIASVARDAGEGAETAQLIRLGLKELAK).

The protein belongs to the RuvA family. As to quaternary structure, homotetramer. Forms an RuvA(8)-RuvB(12)-Holliday junction (HJ) complex. HJ DNA is sandwiched between 2 RuvA tetramers; dsDNA enters through RuvA and exits via RuvB. An RuvB hexamer assembles on each DNA strand where it exits the tetramer. Each RuvB hexamer is contacted by two RuvA subunits (via domain III) on 2 adjacent RuvB subunits; this complex drives branch migration. In the full resolvosome a probable DNA-RuvA(4)-RuvB(12)-RuvC(2) complex forms which resolves the HJ.

The protein resides in the cytoplasm. The RuvA-RuvB-RuvC complex processes Holliday junction (HJ) DNA during genetic recombination and DNA repair, while the RuvA-RuvB complex plays an important role in the rescue of blocked DNA replication forks via replication fork reversal (RFR). RuvA specifically binds to HJ cruciform DNA, conferring on it an open structure. The RuvB hexamer acts as an ATP-dependent pump, pulling dsDNA into and through the RuvAB complex. HJ branch migration allows RuvC to scan DNA until it finds its consensus sequence, where it cleaves and resolves the cruciform DNA. The chain is Holliday junction branch migration complex subunit RuvA from Afipia carboxidovorans (strain ATCC 49405 / DSM 1227 / KCTC 32145 / OM5) (Oligotropha carboxidovorans).